A 117-amino-acid chain; its full sequence is Large ribosomal subunit protein bL17 (117 aa).

It belongs to the bacterial ribosomal protein bL17 family. As to quaternary structure, part of the 50S ribosomal subunit. Contacts protein L32.

The polypeptide is Large ribosomal subunit protein bL17 (Campylobacter jejuni subsp. doylei (strain ATCC BAA-1458 / RM4099 / 269.97)).